A 62-amino-acid chain; its full sequence is Small ribosomal subunit protein uS14 (62 aa).

Zn(2+)-binding residues include Cys-25, Cys-28, Cys-41, and Cys-44.

Belongs to the universal ribosomal protein uS14 family. Zinc-binding uS14 subfamily. In terms of assembly, part of the 30S ribosomal subunit. Contacts proteins S3 and S10. It depends on Zn(2+) as a cofactor.

Functionally, binds 16S rRNA, required for the assembly of 30S particles and may also be responsible for determining the conformation of the 16S rRNA at the A site. The sequence is that of Small ribosomal subunit protein uS14 from Persephonella marina (strain DSM 14350 / EX-H1).